The chain runs to 233 residues: 7-cyano-7-deazaguanine synthase 2 (233 aa).

Position 8–18 (8–18 (LSGGLDSTTCM)) interacts with ATP. Zn(2+) is bound by residues cysteine 186, cysteine 194, cysteine 197, and cysteine 200.

This sequence belongs to the QueC family. In terms of assembly, homodimer. Zn(2+) is required as a cofactor.

The enzyme catalyses 7-carboxy-7-deazaguanine + NH4(+) + ATP = 7-cyano-7-deazaguanine + ADP + phosphate + H2O + H(+). It participates in purine metabolism; 7-cyano-7-deazaguanine biosynthesis. Functionally, catalyzes the ATP-dependent conversion of 7-carboxy-7-deazaguanine (CDG) to 7-cyano-7-deazaguanine (preQ(0)). This chain is 7-cyano-7-deazaguanine synthase 2, found in Desulfitobacterium hafniense (strain Y51).